A 190-amino-acid polypeptide reads, in one-letter code: Large ribosomal subunit protein bL25 (190 aa).

It belongs to the bacterial ribosomal protein bL25 family. CTC subfamily. In terms of assembly, part of the 50S ribosomal subunit; part of the 5S rRNA/L5/L18/L25 subcomplex. Contacts the 5S rRNA. Binds to the 5S rRNA independently of L5 and L18.

This is one of the proteins that binds to the 5S RNA in the ribosome where it forms part of the central protuberance. This chain is Large ribosomal subunit protein bL25, found in Neisseria meningitidis serogroup C (strain 053442).